We begin with the raw amino-acid sequence, 319 residues long: tRNA uridine(34) hydroxylase (319 aa).

The Rhodanese domain occupies 127–221 (KQEDTVIIDA…YGKDPEVQGE (95 aa)). Cys181 serves as the catalytic Cysteine persulfide intermediate.

It belongs to the TrhO family.

It carries out the reaction uridine(34) in tRNA + AH2 + O2 = 5-hydroxyuridine(34) in tRNA + A + H2O. Its function is as follows. Catalyzes oxygen-dependent 5-hydroxyuridine (ho5U) modification at position 34 in tRNAs. The protein is tRNA uridine(34) hydroxylase of Bacillus anthracis (strain A0248).